Here is a 380-residue protein sequence, read N- to C-terminus: Chaperone protein DnaJ (380 aa).

One can recognise a J domain in the interval 5–70; sequence DFYDVLGVNR…QKRAAYDQYG (66 aa). Residues 139–217 form a CR-type zinc finger; the sequence is GCEKQIRIPT…CHGAGRVKSQ (79 aa). 8 residues coordinate Zn(2+): cysteine 152, cysteine 155, cysteine 169, cysteine 172, cysteine 191, cysteine 194, cysteine 205, and cysteine 208. CXXCXGXG motif repeat units follow at residues 152-159, 169-176, 191-198, and 205-212; these read CSHCHGSG, CPTCGGAG, CPTCHGSG, and CNICHGAG.

It belongs to the DnaJ family. In terms of assembly, homodimer. Zn(2+) is required as a cofactor.

It is found in the cytoplasm. Participates actively in the response to hyperosmotic and heat shock by preventing the aggregation of stress-denatured proteins and by disaggregating proteins, also in an autonomous, DnaK-independent fashion. Unfolded proteins bind initially to DnaJ; upon interaction with the DnaJ-bound protein, DnaK hydrolyzes its bound ATP, resulting in the formation of a stable complex. GrpE releases ADP from DnaK; ATP binding to DnaK triggers the release of the substrate protein, thus completing the reaction cycle. Several rounds of ATP-dependent interactions between DnaJ, DnaK and GrpE are required for fully efficient folding. Also involved, together with DnaK and GrpE, in the DNA replication of plasmids through activation of initiation proteins. This chain is Chaperone protein DnaJ, found in Laribacter hongkongensis (strain HLHK9).